A 95-amino-acid polypeptide reads, in one-letter code: Large ribosomal subunit protein bL25 (95 aa).

Belongs to the bacterial ribosomal protein bL25 family. In terms of assembly, part of the 50S ribosomal subunit; part of the 5S rRNA/L5/L18/L25 subcomplex. Contacts the 5S rRNA. Binds to the 5S rRNA independently of L5 and L18.

In terms of biological role, this is one of the proteins that binds to the 5S RNA in the ribosome where it forms part of the central protuberance. In Shewanella putrefaciens (strain CN-32 / ATCC BAA-453), this protein is Large ribosomal subunit protein bL25.